The chain runs to 315 residues: Methionyl-tRNA formyltransferase (315 aa).

(6S)-5,6,7,8-tetrahydrofolate is bound at residue 113 to 116 (SLLP).

This sequence belongs to the Fmt family.

The enzyme catalyses L-methionyl-tRNA(fMet) + (6R)-10-formyltetrahydrofolate = N-formyl-L-methionyl-tRNA(fMet) + (6S)-5,6,7,8-tetrahydrofolate + H(+). In terms of biological role, attaches a formyl group to the free amino group of methionyl-tRNA(fMet). The formyl group appears to play a dual role in the initiator identity of N-formylmethionyl-tRNA by promoting its recognition by IF2 and preventing the misappropriation of this tRNA by the elongation apparatus. The sequence is that of Methionyl-tRNA formyltransferase from Salmonella dublin (strain CT_02021853).